The following is a 155-amino-acid chain: Snaclec bothrojaracin subunit alpha (155 aa).

Positions 1–23 (MGRFLFVSFGLLVVFLSLSGTAA) are cleaved as a signal peptide. Intrachain disulfides connect Cys-25-Cys-36, Cys-53-Cys-150, and Cys-125-Cys-142. Positions 32–151 (HEGHCYKFFQ…CGQQNPFVCK (120 aa)) constitute a C-type lectin domain.

This sequence belongs to the snaclec family. In terms of assembly, heterodimer of subunits alpha and beta; disulfide-linked. As to expression, expressed by the venom gland.

The protein resides in the secreted. Functionally, this potent antithrombotic agent acts in a calcium-independent manner. Exerts its anticoagulant effect by two distinct mechanisms. It binds to activated thrombin through exosite 1, blocking fibrinogen clotting, platelet activation, factor V activation and other effects, and it interacts with prothrombin (F2), decreasing its proteolytic activation -especially in the presence of factor Va. In vivo, intravenous injection before thrombosis induction causes a significant decrease in thrombus weight. Furthermore, BJC shows a prolonged effect by remaining in the plasma bound to prothrombin for at least 12 hours. The polypeptide is Snaclec bothrojaracin subunit alpha (Bothrops jararaca (Jararaca)).